The following is a 596-amino-acid chain: Probable protein phosphatase 2C 26 (596 aa).

Positions 122 to 154 are disordered; it reads SGPLDPAVPFSGPLPAKPPKPASSSSRGFSRRF. One can recognise a PPM-type phosphatase domain in the interval 177-584; that stretch reads LRRDDGVQWA…DDVTVMVISL (408 aa). Mn(2+) contacts are provided by Asp-212, Gly-213, Asp-512, and Asp-575.

Belongs to the PP2C family. The cofactor is Mg(2+). Requires Mn(2+) as cofactor.

The catalysed reaction is O-phospho-L-seryl-[protein] + H2O = L-seryl-[protein] + phosphate. The enzyme catalyses O-phospho-L-threonyl-[protein] + H2O = L-threonyl-[protein] + phosphate. This Oryza sativa subsp. japonica (Rice) protein is Probable protein phosphatase 2C 26.